Here is a 202-residue protein sequence, read N- to C-terminus: Potassium-transporting ATPase KdpC subunit (202 aa).

A helical transmembrane segment spans residues 7-27 (PAIFVLLALTLITGLLYPLAM). The segment at 66–103 (FHGRPSATSTADPNDSTKTVPAPYNAANSSGSNLGPTS) is disordered. 2 stretches are compositionally biased toward polar residues: residues 71-84 (SATSTADPNDSTKT) and 91-101 (AANSSGSNLGP).

This sequence belongs to the KdpC family. In terms of assembly, the system is composed of three essential subunits: KdpA, KdpB and KdpC.

The protein resides in the cell inner membrane. Its function is as follows. Part of the high-affinity ATP-driven potassium transport (or Kdp) system, which catalyzes the hydrolysis of ATP coupled with the electrogenic transport of potassium into the cytoplasm. This subunit acts as a catalytic chaperone that increases the ATP-binding affinity of the ATP-hydrolyzing subunit KdpB by the formation of a transient KdpB/KdpC/ATP ternary complex. The protein is Potassium-transporting ATPase KdpC subunit of Bradyrhizobium sp. (strain ORS 278).